The sequence spans 128 residues: Disintegrin gabonin-1 (128 aa).

An N-terminal signal peptide occupies residues 1-20; it reads MIQVLLVIICLAVFPYQGSS. A propeptide spanning residues 21-47 is cleaved from the precursor; it reads IILESGNVNDYEIVYPKKVTVLPTGAM. Residues 47–112 enclose the Disintegrin domain; sequence MNSAHPCCDP…DCPRNPNKGE (66 aa). Disulfide bonds link C53–C76, C67–C73, C72–C97, and C85–C104. The Cell attachment site signature appears at 89-91; the sequence is RGD. The tract at residues 108 to 128 is disordered; it reads PNKGESDELEWSAAATGSVLM.

Belongs to the disintegrin family. Dimeric disintegrin subfamily. As to quaternary structure, heterodimer with bitisgabonin (bitisgabonin-1 is the name of the heterodimer); disulfide-linked. In terms of tissue distribution, expressed by the venom gland.

Its subcellular location is the secreted. In terms of biological role, the heterodimer bitisgabonin-1 is a potent inhibitor of the adhesion of the RGD-dependent integrin alpha-5/beta-1 (ITGA5/ITGB1) to immobilized fibronectin. This chain is Disintegrin gabonin-1, found in Bitis gabonica (Gaboon adder).